The primary structure comprises 216 residues: UPF0502 protein Pmen_2627 (216 aa).

Belongs to the UPF0502 family.

This is UPF0502 protein Pmen_2627 from Ectopseudomonas mendocina (strain ymp) (Pseudomonas mendocina).